The primary structure comprises 397 residues: Erythromycin C-12 hydroxylase (397 aa).

Substrate is bound at residue 74–75 (HE). The heme site is built by His-81 and Arg-85. Gln-278 lines the substrate pocket. A heme-binding site is contributed by Arg-279. Over residues 307–322 (RDSDAHDDPDRFDPSR) the composition is skewed to basic and acidic residues. Residues 307–326 (RDSDAHDDPDRFDPSRKSGG) form a disordered region. Residues His-337 and Cys-339 each contribute to the heme site.

The protein belongs to the cytochrome P450 family. In terms of assembly, monomer. The cofactor is heme b.

It carries out the reaction erythromycin D + NADPH + O2 + H(+) = erythromycin C + NADP(+) + H2O. Its pathway is antibiotic biosynthesis; erythromycin biosynthesis. Responsible for the C-12 hydroxylation of the macrolactone ring of erythromycin. Thus, EryK catalyzes the hydroxylation of erythromycin D (ErD) at the C-12 position to produce erythromycin C (ErC). Erythromycin B (ErB) is not a substrate for this enzyme. This Saccharopolyspora erythraea (strain ATCC 11635 / DSM 40517 / JCM 4748 / NBRC 13426 / NCIMB 8594 / NRRL 2338) protein is Erythromycin C-12 hydroxylase (eryK).